A 370-amino-acid polypeptide reads, in one-letter code: Putative FBD-associated F-box protein At1g50980 (370 aa).

Positions 31–77 (IRTISEFPDKVLLKILSLLPSKDVVATGVLSKRWRSLWKDVKTFRTS) constitute an F-box domain. Residues 292-343 (LMGNQPDLIPKSLSSHLEILEWRQYNDTAQEREAAKYILANASGLRKATFYT) form the FBD domain.

This chain is Putative FBD-associated F-box protein At1g50980, found in Arabidopsis thaliana (Mouse-ear cress).